We begin with the raw amino-acid sequence, 140 residues long: Lymphocyte antigen 6L (140 aa).

An N-terminal signal peptide occupies residues 1 to 20 (MAPLLLVLWASLVSMELTGG). The UPAR/Ly6 domain maps to 31 to 124 (LSCFECFKVL…GSWEGFWSLP (94 aa)). Intrachain disulfides connect C33–C50 and C105–C110. S116 is lipidated: GPI-anchor amidated serine. The propeptide at 117–140 (WEGFWSLPGRLLLPMGLGLFCTLL) is removed in mature form.

It is found in the cell membrane. In Mus musculus (Mouse), this protein is Lymphocyte antigen 6L.